We begin with the raw amino-acid sequence, 268 residues long: Undecaprenyl-diphosphatase (268 aa).

The next 7 membrane-spanning stretches (helical) occupy residues 47–67, 83–103, 109–129, 144–164, 184–204, 218–238, and 246–266; these read FTVLIQPGAILAIVVIYFAKL, FVIGVLAAFLPAVIVGLIAGK, LFNPWVVCFSLIVGGAVLMWV, FPLPMYVWIGIAQCVAMIPGV, AAEFSFFLAIPTMTGAFAYDF, TVAIGFVVSFVTAIIVVKAFL, and FTFFAWWRVIVGTLGLIALAL.

This sequence belongs to the UppP family.

The protein resides in the cell inner membrane. The catalysed reaction is di-trans,octa-cis-undecaprenyl diphosphate + H2O = di-trans,octa-cis-undecaprenyl phosphate + phosphate + H(+). In terms of biological role, catalyzes the dephosphorylation of undecaprenyl diphosphate (UPP). Confers resistance to bacitracin. The polypeptide is Undecaprenyl-diphosphatase (Nitrobacter winogradskyi (strain ATCC 25391 / DSM 10237 / CIP 104748 / NCIMB 11846 / Nb-255)).